Here is a 171-residue protein sequence, read N- to C-terminus: Co-chaperone protein HscB homolog (171 aa).

The J domain maps to 2–74 (NHFELFGLPP…ISRAEYLLSQ (73 aa)).

Belongs to the HscB family. Interacts with HscA and stimulates its ATPase activity.

Co-chaperone involved in the maturation of iron-sulfur cluster-containing proteins. Seems to help targeting proteins to be folded toward HscA. The protein is Co-chaperone protein HscB homolog of Vibrio vulnificus (strain YJ016).